Reading from the N-terminus, the 227-residue chain is Cytochrome c oxidase subunit 2 (227 aa).

Over 1-14 (MAYPLQLGLQDASS) the chain is Mitochondrial intermembrane. The helical transmembrane segment at 15-45 (PIMEELMNFHDHTLMIVFLISSLVLYLISLM) threads the bilayer. The Mitochondrial matrix portion of the chain corresponds to 46-59 (LTTKLIHTSTMDAQ). The chain crosses the membrane as a helical span at residues 60–87 (EVETVWTILPAIILILIALPSLRILYMM). The Mitochondrial intermembrane segment spans residues 88–227 (DEINNPVLTV…LFENWSLSLT (140 aa)). Histidine 161, cysteine 196, glutamate 198, cysteine 200, histidine 204, and methionine 207 together coordinate Cu cation. Glutamate 198 contributes to the Mg(2+) binding site.

This sequence belongs to the cytochrome c oxidase subunit 2 family. Component of the cytochrome c oxidase (complex IV, CIV), a multisubunit enzyme composed of 14 subunits. The complex is composed of a catalytic core of 3 subunits MT-CO1, MT-CO2 and MT-CO3, encoded in the mitochondrial DNA, and 11 supernumerary subunits COX4I, COX5A, COX5B, COX6A, COX6B, COX6C, COX7A, COX7B, COX7C, COX8 and NDUFA4, which are encoded in the nuclear genome. The complex exists as a monomer or a dimer and forms supercomplexes (SCs) in the inner mitochondrial membrane with NADH-ubiquinone oxidoreductase (complex I, CI) and ubiquinol-cytochrome c oxidoreductase (cytochrome b-c1 complex, complex III, CIII), resulting in different assemblies (supercomplex SCI(1)III(2)IV(1) and megacomplex MCI(2)III(2)IV(2)). Found in a complex with TMEM177, COA6, COX18, COX20, SCO1 and SCO2. Interacts with TMEM177 in a COX20-dependent manner. Interacts with COX20. Interacts with COX16. Cu cation serves as cofactor.

The protein localises to the mitochondrion inner membrane. It carries out the reaction 4 Fe(II)-[cytochrome c] + O2 + 8 H(+)(in) = 4 Fe(III)-[cytochrome c] + 2 H2O + 4 H(+)(out). In terms of biological role, component of the cytochrome c oxidase, the last enzyme in the mitochondrial electron transport chain which drives oxidative phosphorylation. The respiratory chain contains 3 multisubunit complexes succinate dehydrogenase (complex II, CII), ubiquinol-cytochrome c oxidoreductase (cytochrome b-c1 complex, complex III, CIII) and cytochrome c oxidase (complex IV, CIV), that cooperate to transfer electrons derived from NADH and succinate to molecular oxygen, creating an electrochemical gradient over the inner membrane that drives transmembrane transport and the ATP synthase. Cytochrome c oxidase is the component of the respiratory chain that catalyzes the reduction of oxygen to water. Electrons originating from reduced cytochrome c in the intermembrane space (IMS) are transferred via the dinuclear copper A center (CU(A)) of subunit 2 and heme A of subunit 1 to the active site in subunit 1, a binuclear center (BNC) formed by heme A3 and copper B (CU(B)). The BNC reduces molecular oxygen to 2 water molecules using 4 electrons from cytochrome c in the IMS and 4 protons from the mitochondrial matrix. This chain is Cytochrome c oxidase subunit 2 (MT-CO2), found in Taterillus emini (Emin's gerbil).